Here is a 454-residue protein sequence, read N- to C-terminus: Signal recognition particle protein (454 aa).

GTP contacts are provided by residues 102–109 (GLQGTGKT), 184–188 (DTAGR), and 242–245 (TKMD).

It belongs to the GTP-binding SRP family. SRP54 subfamily. As to quaternary structure, part of the signal recognition particle protein translocation system, which is composed of SRP and FtsY.

It is found in the cytoplasm. It carries out the reaction GTP + H2O = GDP + phosphate + H(+). Involved in targeting and insertion of nascent membrane proteins into the cytoplasmic membrane. Binds to the hydrophobic signal sequence of the ribosome-nascent chain (RNC) as it emerges from the ribosomes. The SRP-RNC complex is then targeted to the cytoplasmic membrane where it interacts with the SRP receptor FtsY. This chain is Signal recognition particle protein, found in Aquifex aeolicus (strain VF5).